The following is a 198-amino-acid chain: MICOS complex subunit MIC26 (198 aa).

The first 25 residues, 1-25 (MFKVIQRSVGPASLSLLTFKVYAAP), serve as a signal peptide directing secretion. Residues 108–128 (PGFFPRLGVIGFAGLIGLLLA) traverse the membrane as a helical segment. Ser162 carries O-linked (Xyl...) (chondroitin sulfate) serine glycosylation.

This sequence belongs to the apolipoprotein O/MICOS complex subunit Mic27 family. Component of the mitochondrial contact site and cristae organizing system (MICOS) complex, composed of at least MICOS10/MIC10, CHCHD3/MIC19, CHCHD6/MIC25, APOOL/MIC27, IMMT/MIC60, APOO/MIC23/MIC26 and MICOS13/MIC13. This complex was also known under the names MINOS or MitOS complex. he MICOS complex associates with mitochondrial outer membrane proteins SAMM50, MTX1 and MTX2 (together described as components of the mitochondrial outer membrane sorting assembly machinery (SAM) complex) and DNAJC11, mitochondrial inner membrane protein TMEM11 and with HSPA9. The MICOS and SAM complexes together with DNAJC11 are part of a large protein complex spanning both membranes termed the mitochondrial intermembrane space bridging (MIB) complex. Interacts with IMMT/MIC60. Interacts with MICOS10/MIC10 and APOOL/MIC27. In terms of processing, O-glycosylation; glycosaminoglycan of chondroitin-sulfate type. As to expression, expressed in all tissues examined. Up-regulated in diabetic heart.

It is found in the mitochondrion inner membrane. Its subcellular location is the secreted. The protein localises to the mitochondrion. It localises to the golgi apparatus membrane. The protein resides in the endoplasmic reticulum membrane. Component of the MICOS complex, a large protein complex of the mitochondrial inner membrane that plays crucial roles in the maintenance of crista junctions, inner membrane architecture, and formation of contact sites to the outer membrane. Plays a crucial role in crista junction formation and mitochondrial function. Can promote cardiac lipotoxicity by enhancing mitochondrial respiration and fatty acid metabolism in cardiac myoblasts. Promotes cholesterol efflux from macrophage cells. Detected in HDL, LDL and VLDL. Secreted by a microsomal triglyceride transfer protein (MTTP)-dependent mechanism, probably as a VLDL-associated protein that is subsequently transferred to HDL. The polypeptide is MICOS complex subunit MIC26 (APOO) (Homo sapiens (Human)).